Here is a 191-residue protein sequence, read N- to C-terminus: GDP-mannose pyrophosphatase (191 aa).

Residues Tyr17, 38–40 (KRE), Arg67, and 85–87 (AGL) contribute to the GDP-alpha-D-mannose site. The 138-residue stretch at 43-180 (DRGNGATILL…EIRDGKTVLL (138 aa)) folds into the Nudix hydrolase domain. 3 residues coordinate Mg(2+): Ala85, Glu100, and Glu104. The short motif at 86-106 (GLLDNDEPEVCIRKEAIEETG) is the Nudix box element. Residues Glu104, Glu127, 150-151 (DE), and Lys176 each bind GDP-alpha-D-mannose. Glu151 contributes to the Mg(2+) binding site.

This sequence belongs to the Nudix hydrolase family. NudK subfamily. Homodimer. Mg(2+) serves as cofactor.

The catalysed reaction is GDP-alpha-D-mannose + H2O = alpha-D-mannose 1-phosphate + GMP + 2 H(+). Nucleoside diphosphate sugar hydrolase that hydrolyzes GDP-mannose as its preferred substrate, yielding GMP and mannose-1-phosphate. The sequence is that of GDP-mannose pyrophosphatase (nudK) from Salmonella choleraesuis (strain SC-B67).